A 495-amino-acid polypeptide reads, in one-letter code: Chromosomal replication initiator protein DnaA (495 aa).

Residues 1–91 (MTADPDPPFV…ITALSRHLGQ (91 aa)) are domain I, interacts with DnaA modulators. Residues 91 to 154 (QRVELGVRIA…TPAAEDPNAV (64 aa)) are domain II. The segment at 155–371 (SLNRRYTFDT…GALIRVTAFA (217 aa)) is domain III, AAA+ region. ATP contacts are provided by glycine 199, glycine 201, lysine 202, and threonine 203. A domain IV, binds dsDNA region spans residues 372–495 (SLNKTPIDKS…TTRIRQRAKR (124 aa)).

This sequence belongs to the DnaA family. Oligomerizes as a right-handed, spiral filament on DNA at oriC.

The protein resides in the cytoplasm. In terms of biological role, plays an essential role in the initiation and regulation of chromosomal replication. ATP-DnaA binds to the origin of replication (oriC) to initiate formation of the DNA replication initiation complex once per cell cycle. Binds the DnaA box (a 9 base pair repeat at the origin) and separates the double-stranded (ds)DNA. Forms a right-handed helical filament on oriC DNA; dsDNA binds to the exterior of the filament while single-stranded (ss)DNA is stabiized in the filament's interior. The ATP-DnaA-oriC complex binds and stabilizes one strand of the AT-rich DNA unwinding element (DUE), permitting loading of DNA polymerase. After initiation quickly degrades to an ADP-DnaA complex that is not apt for DNA replication. Binds acidic phospholipids. This Mycobacterium sp. (strain JLS) protein is Chromosomal replication initiator protein DnaA.